A 338-amino-acid chain; its full sequence is Ornithine carbamoyltransferase (338 aa).

Carbamoyl phosphate contacts are provided by residues 56–59 (STRT), Gln-83, Arg-107, and 134–137 (HPTQ). L-ornithine is bound by residues Asn-168, Asp-232, and 236–237 (SM). Carbamoyl phosphate is bound by residues 274 to 275 (CL) and Arg-320.

Belongs to the aspartate/ornithine carbamoyltransferase superfamily. OTCase family.

The protein localises to the cytoplasm. The enzyme catalyses carbamoyl phosphate + L-ornithine = L-citrulline + phosphate + H(+). It functions in the pathway amino-acid biosynthesis; L-arginine biosynthesis; L-arginine from L-ornithine and carbamoyl phosphate: step 1/3. Functionally, reversibly catalyzes the transfer of the carbamoyl group from carbamoyl phosphate (CP) to the N(epsilon) atom of ornithine (ORN) to produce L-citrulline. In Photorhabdus laumondii subsp. laumondii (strain DSM 15139 / CIP 105565 / TT01) (Photorhabdus luminescens subsp. laumondii), this protein is Ornithine carbamoyltransferase.